We begin with the raw amino-acid sequence, 568 residues long: Oxygen-dependent choline dehydrogenase (568 aa).

6-35 (DYIIVGAGSAGCVLADRLSASGEHYILLLE) serves as a coordination point for FAD. The active-site Proton acceptor is the His-470.

The protein belongs to the GMC oxidoreductase family. FAD serves as cofactor.

It carries out the reaction choline + A = betaine aldehyde + AH2. The catalysed reaction is betaine aldehyde + NAD(+) + H2O = glycine betaine + NADH + 2 H(+). The protein operates within amine and polyamine biosynthesis; betaine biosynthesis via choline pathway; betaine aldehyde from choline (cytochrome c reductase route): step 1/1. Functionally, involved in the biosynthesis of the osmoprotectant glycine betaine. Catalyzes the oxidation of choline to betaine aldehyde and betaine aldehyde to glycine betaine at the same rate. This is Oxygen-dependent choline dehydrogenase from Photobacterium profundum (strain SS9).